The primary structure comprises 191 residues: uncharacterized protein (191 aa).

The next 5 membrane-spanning stretches (helical) occupy residues 24–44, 51–71, 114–134, 139–159, and 167–187; these read IVRG…GASG, IIAA…LGAF, LIDG…FFLF, ALYV…VFIG, and IISG…CFMI.

The protein resides in the cell membrane. This is an uncharacterized protein from Methanocaldococcus jannaschii (strain ATCC 43067 / DSM 2661 / JAL-1 / JCM 10045 / NBRC 100440) (Methanococcus jannaschii).